We begin with the raw amino-acid sequence, 396 residues long: tRNA(Met) cytidine acetate ligase (396 aa).

Residues 9–22 (IVEY…HLHH), G103, N154, and R179 contribute to the ATP site.

This sequence belongs to the TmcAL family.

It localises to the cytoplasm. The catalysed reaction is cytidine(34) in elongator tRNA(Met) + acetate + ATP = N(4)-acetylcytidine(34) in elongator tRNA(Met) + AMP + diphosphate. Functionally, catalyzes the formation of N(4)-acetylcytidine (ac(4)C) at the wobble position of elongator tRNA(Met), using acetate and ATP as substrates. First activates an acetate ion to form acetyladenylate (Ac-AMP) and then transfers the acetyl group to tRNA to form ac(4)C34. In Fusobacterium nucleatum subsp. nucleatum (strain ATCC 25586 / DSM 15643 / BCRC 10681 / CIP 101130 / JCM 8532 / KCTC 2640 / LMG 13131 / VPI 4355), this protein is tRNA(Met) cytidine acetate ligase.